Reading from the N-terminus, the 495-residue chain is MTTSALNPLRQPKPFYLIFSIEFWERFGFYGLQGILAVYLVKALGLREADSFTLFSSFIALVYGLIAVGGWLGDKVLGTKRTILLGALVLTAGYAMVTASSEHISLLYLGMGTIAVGNGLFKANPSSLLSKCYEENDPRLDGAFTMYYMAINIGSLLSMLATPWLADQFGYAHAFALSVVGMLITVANFILMQGWVKNYGSDADFRTPRLSTWLAVLAGVVAACAAAALLLKHEIIANVVLAVLSIGVVGLYVKETLLLKGAERKKMIVAAILMLQATVFFVLYNQMPLSLNFFAIHNTEHMLFGIPVQPEQFQSLNPFWIMLASPLLALCYNKLGNRLPMPHKFAIGMVLCAGAFLVLPLGAKYANAQGLVSSNWMVLSYLLQSVGELLISGLGLAMVAQLVPQRLMGFIMGAWFLTSAASSVIAGWVAGLTAAPDNVTNPLATLEIYSRVFTQIGVVTGVIAVVTIIIAPWLHRMTLDEKPAHPEHEMALDAR.

Topologically, residues 1 to 20 (MTTSALNPLRQPKPFYLIFS) are cytoplasmic. The chain crosses the membrane as a helical span at residues 21-41 (IEFWERFGFYGLQGILAVYLV). Residues 42–51 (KALGLREADS) are Periplasmic-facing. Residues 52-72 (FTLFSSFIALVYGLIAVGGWL) form a helical membrane-spanning segment. Over 73-81 (GDKVLGTKR) the chain is Cytoplasmic. A run of 2 helical transmembrane segments spans residues 82 to 102 (TILLGALVLTAGYAMVTASSE) and 103 to 123 (HISLLYLGMGTIAVGNGLFKA). Residues 124–145 (NPSSLLSKCYEENDPRLDGAFT) are Periplasmic-facing. The chain crosses the membrane as a helical span at residues 146-166 (MYYMAINIGSLLSMLATPWLA). The Cytoplasmic segment spans residues 167–171 (DQFGY). A helical transmembrane segment spans residues 172-192 (AHAFALSVVGMLITVANFILM). At 193–209 (QGWVKNYGSDADFRTPR) the chain is on the periplasmic side. A helical transmembrane segment spans residues 210–230 (LSTWLAVLAGVVAACAAAALL). Over 231–232 (LK) the chain is Cytoplasmic. A helical membrane pass occupies residues 233 to 253 (HEIIANVVLAVLSIGVVGLYV). Residues 254–266 (KETLLLKGAERKK) lie on the Periplasmic side of the membrane. The chain crosses the membrane as a helical span at residues 267–287 (MIVAAILMLQATVFFVLYNQM). Residues 288–312 (PLSLNFFAIHNTEHMLFGIPVQPEQ) are Cytoplasmic-facing. The helical transmembrane segment at 313-333 (FQSLNPFWIMLASPLLALCYN) threads the bilayer. The Periplasmic portion of the chain corresponds to 334–344 (KLGNRLPMPHK). The helical transmembrane segment at 345–365 (FAIGMVLCAGAFLVLPLGAKY) threads the bilayer. The Cytoplasmic portion of the chain corresponds to 366–375 (ANAQGLVSSN). Residues 376–396 (WMVLSYLLQSVGELLISGLGL) form a helical membrane-spanning segment. Over 397–409 (AMVAQLVPQRLMG) the chain is Periplasmic. The chain crosses the membrane as a helical span at residues 410-430 (FIMGAWFLTSAASSVIAGWVA). The Cytoplasmic portion of the chain corresponds to 431–451 (GLTAAPDNVTNPLATLEIYSR). The helical transmembrane segment at 452–472 (VFTQIGVVTGVIAVVTIIIAP) threads the bilayer. Topologically, residues 473–495 (WLHRMTLDEKPAHPEHEMALDAR) are periplasmic.

Belongs to the major facilitator superfamily. Proton-dependent oligopeptide transporter (POT/PTR) (TC 2.A.17) family. DtpA subfamily.

Its subcellular location is the cell inner membrane. In terms of biological role, proton-dependent permease that transports di- and tripeptides. This Chromobacterium violaceum (strain ATCC 12472 / DSM 30191 / JCM 1249 / CCUG 213 / NBRC 12614 / NCIMB 9131 / NCTC 9757 / MK) protein is Dipeptide and tripeptide permease A.